The following is a 612-amino-acid chain: Serine/threonine-protein kinase Nek1 (612 aa).

One can recognise a Protein kinase domain in the interval 4-258 (YEFLEQIGKG…ASDLLRHPHL (255 aa)). ATP-binding positions include 10-18 (IGKGSFGSA) and Lys33. The active-site Proton acceptor is Asp129. Over residues 503–513 (ISDGSSSSDQN) the composition is skewed to polar residues. A disordered region spans residues 503-534 (ISDGSSSSDQNATAGASSHTTSSSSRRCRFDP). The segment covering 514–527 (ATAGASSHTTSSSS) has biased composition (low complexity).

It belongs to the protein kinase superfamily. NEK Ser/Thr protein kinase family. NIMA subfamily.

The enzyme catalyses L-seryl-[protein] + ATP = O-phospho-L-seryl-[protein] + ADP + H(+). It catalyses the reaction L-threonyl-[protein] + ATP = O-phospho-L-threonyl-[protein] + ADP + H(+). Its function is as follows. May be involved in plant development processes. The sequence is that of Serine/threonine-protein kinase Nek1 (NEK1) from Arabidopsis thaliana (Mouse-ear cress).